Consider the following 241-residue polypeptide: Proteasome subunit alpha (241 aa).

This sequence belongs to the peptidase T1A family. The 20S proteasome core is composed of 14 alpha and 14 beta subunits that assemble into four stacked heptameric rings, resulting in a barrel-shaped structure. The two inner rings, each composed of seven catalytic beta subunits, are sandwiched by two outer rings, each composed of seven alpha subunits. The catalytic chamber with the active sites is on the inside of the barrel. Has a gated structure, the ends of the cylinder being occluded by the N-termini of the alpha-subunits. Is capped at one or both ends by the proteasome regulatory ATPase, PAN.

The protein resides in the cytoplasm. With respect to regulation, the formation of the proteasomal ATPase PAN-20S proteasome complex, via the docking of the C-termini of PAN into the intersubunit pockets in the alpha-rings, triggers opening of the gate for substrate entry. Interconversion between the open-gate and close-gate conformations leads to a dynamic regulation of the 20S proteasome proteolysis activity. Functionally, component of the proteasome core, a large protease complex with broad specificity involved in protein degradation. The protein is Proteasome subunit alpha of Methanosphaerula palustris (strain ATCC BAA-1556 / DSM 19958 / E1-9c).